The primary structure comprises 133 residues: Large ribosomal subunit protein uL15 (133 aa).

The segment at 1–58 (MALQNLTPAPGSTHATKRLGRGQGSGNGKTAGKGNKGQRARKGYNEKRGFEGGQQPLQ) is disordered. A compositionally biased stretch (gly residues) spans 21-35 (RGQGSGNGKTAGKGN).

This sequence belongs to the universal ribosomal protein uL15 family. In terms of assembly, part of the 50S ribosomal subunit.

Binds to the 23S rRNA. The sequence is that of Large ribosomal subunit protein uL15 from Campylobacter curvus (strain 525.92).